A 627-amino-acid chain; its full sequence is (-)-beta-pinene synthase 2, chloroplastic (627 aa).

A chloroplast-targeting transit peptide spans 1–51; the sequence is MDLISVLPSASKSCVCLHKPLSSSTHKLKPFCRKIRILGMPRPRKSVLMVS. Positions 378, 382, and 530 each coordinate Mg(2+). The DDXXD motif signature appears at 378–382; it reads DDMYD.

This sequence belongs to the terpene synthase family. Tpsd subfamily. It depends on Mg(2+) as a cofactor. The cofactor is Mn(2+).

It is found in the plastid. It localises to the chloroplast. The enzyme catalyses (2E)-geranyl diphosphate = (1S,5S)-beta-pinene + diphosphate. The catalysed reaction is (2E)-geranyl diphosphate = (1S,5S)-alpha-pinene + diphosphate. It participates in terpene metabolism; oleoresin biosynthesis. The protein operates within secondary metabolite biosynthesis; terpenoid biosynthesis. Functionally, monoterpene synthase (TPS) involved in the biosynthesis of monoterpene natural products included in conifer oleoresin secretions and volatile emissions; these compounds contribute to biotic and abiotic stress defense against herbivores and pathogens. Catalyzes the conversion of (2E)-geranyl diphosphate (GPP) to (-)-beta-pinene and, to a lower extent, to (-)-alpha-pinene. This chain is (-)-beta-pinene synthase 2, chloroplastic, found in Pinus banksiana (Jack pine).